The sequence spans 860 residues: DDB1- and CUL4-associated factor 6 (860 aa).

WD repeat units lie at residues 49–88 (VHDGCVNTICWNDTGEYILSGSDDTKLVISNPYSRKVLTT), 92–133 (GHRA…ETNR), 139–179 (CHYG…SCTK), 189–229 (NCRR…TRAT), and 251–290 (NKSCRVTSLCYSEDGQEILVSYSSDYIYLFDPKDDTAREL). Basic and acidic residues-rich tracts occupy residues 288-303 (RELKTPSAEERREELR) and 312-334 (LRGDWSDTGPRARPESERERDGE). Disordered regions lie at residues 288 to 340 (RELK…PNVS), 355 to 392 (EASEVAQSNRGRGRSRPRGGTSQSDISTLPTVPSSPDL), 407 to 490 (QFLQ…TTST), and 502 to 675 (IASS…GPGD). A Phosphoserine modification is found at Ser336. Polar residues-rich tracts occupy residues 379–388 (DISTLPTVPS) and 409–421 (LQPSTSSTMSAQA). Over residues 422–441 (HSTSSPTESPHSTPLLSSPD) the composition is skewed to low complexity. Residues 457-467 (HQSDNNNEKLS) show a composition bias toward basic and acidic residues. Residues 480–490 (HYSTEGTTTST) are compositionally biased toward polar residues. Residues 502–511 (IASSSRGIGS) show a composition bias toward low complexity. Basic and acidic residues predominate over residues 535–549 (SETKAPEESSEDVTK). The segment covering 614 to 626 (TSTESATNENNTN) has biased composition (low complexity). Over residues 627–636 (PEPQFQTEAT) the composition is skewed to polar residues. Position 649 is a phosphoserine (Ser649). Thr654 is subject to Phosphothreonine. At Ser657 the chain carries Phosphoserine. Residues 676–705 (RRSAVARIQEFFRRRKERKEMEELDTLNIR) enclose the IQ domain. 2 WD repeats span residues 718–756 (NSRTMIKEANFWGANFVMSGSDCGHIFIWDRHTAEHLML) and 759–798 (ADNHVVNCLQPHPFDPILASSGIDYDIKIWSPLEESRIFN). Residues Ser847 and Ser850 each carry the phosphoserine modification.

In terms of assembly, interacts with the nuclear receptors NR3C1 and AR in the presence of ligand. Interacts with DDB1, CUL4A and CUL4B. As to expression, highly expressed in skeletal muscle and testis. Expressed to a lesser degree in heart, prostate, and adrenal gland.

It is found in the nucleus. It participates in protein modification; protein ubiquitination. Its function is as follows. Ligand-dependent coactivator of nuclear receptors. Enhance transcriptional activity of the nuclear receptors NR3C1 and AR. May function as a substrate receptor for CUL4-DDB1 E3 ubiquitin-protein ligase complex. The chain is DDB1- and CUL4-associated factor 6 (DCAF6) from Homo sapiens (Human).